The following is a 271-amino-acid chain: MADYSAGTESQEVVVNVTKNTSETIQRSDSLVSVPFLQKLVAEAVGTYFLIFAGCASLVVNENYYNMITFPGIAIVWGLVLTVLVYTVGHISGGHFNPAVTIAFASTRRFPLIQVPAYVVAQLLGSILASGTLRLLFMGNHDQFSGTVPNGTNLQAFVFEFIMTFFLMFVICGVATDNRAVGEFAGIAIGSTLLLNVIIGGPVTGASMNPARSLGPAFVHGEYEGIWIYLLAPVVGAIAGAWVYNIVRYTDKPLSETTKSASFLKGRAASK.

2 helical membrane passes run 40–62 (LVAEAVGTYFLIFAGCASLVVNE) and 72–94 (GIAIVWGLVLTVLVYTVGHISGG). Residues 97 to 99 (NPA) carry the NPA 1 motif. A run of 3 helical transmembrane segments spans residues 115-137 (VPAYVVAQLLGSILASGTLRLLF), 152-174 (TNLQAFVFEFIMTFFLMFVICGV), and 181-203 (VGEFAGIAIGSTLLLNVIIGGPV). The NPA 2 signature appears at 209-211 (NPA). A helical membrane pass occupies residues 225–247 (GIWIYLLAPVVGAIAGAWVYNIV). Phosphoserine; by CPK is present on Ser262.

Belongs to the MIP/aquaporin (TC 1.A.8) family. NIP (TC 1.A.8.12) subfamily.

Its subcellular location is the symbiosome. It localises to the peribacteroid membrane. Aquaporins facilitate the transport of water and small neutral solutes across cell membranes. This aquaporin may function in transporting small molecules across the peribacteroid membranes. The sequence is that of Nodulin-26 from Glycine max (Soybean).